The sequence spans 141 residues: Nucleoside diphosphate kinase (141 aa).

The ATP site is built by Lys11, Phe59, Arg87, Thr93, Arg104, and Asn114. His117 acts as the Pros-phosphohistidine intermediate in catalysis.

It belongs to the NDK family. Homotetramer. It depends on Mg(2+) as a cofactor.

The protein localises to the cytoplasm. The catalysed reaction is a 2'-deoxyribonucleoside 5'-diphosphate + ATP = a 2'-deoxyribonucleoside 5'-triphosphate + ADP. It catalyses the reaction a ribonucleoside 5'-diphosphate + ATP = a ribonucleoside 5'-triphosphate + ADP. Functionally, major role in the synthesis of nucleoside triphosphates other than ATP. The ATP gamma phosphate is transferred to the NDP beta phosphate via a ping-pong mechanism, using a phosphorylated active-site intermediate. This chain is Nucleoside diphosphate kinase, found in Polaromonas naphthalenivorans (strain CJ2).